Reading from the N-terminus, the 426-residue chain is Glutamate-1-semialdehyde 2,1-aminomutase (426 aa).

At lysine 265 the chain carries N6-(pyridoxal phosphate)lysine.

This sequence belongs to the class-III pyridoxal-phosphate-dependent aminotransferase family. HemL subfamily. In terms of assembly, homodimer. Pyridoxal 5'-phosphate serves as cofactor.

Its subcellular location is the cytoplasm. It carries out the reaction (S)-4-amino-5-oxopentanoate = 5-aminolevulinate. It participates in porphyrin-containing compound metabolism; protoporphyrin-IX biosynthesis; 5-aminolevulinate from L-glutamyl-tRNA(Glu): step 2/2. The polypeptide is Glutamate-1-semialdehyde 2,1-aminomutase (Escherichia coli O139:H28 (strain E24377A / ETEC)).